A 482-amino-acid chain; its full sequence is uncharacterized protein (482 aa).

Residues Phe-231–Asp-459 enclose the AB hydrolase-1 domain.

This is an uncharacterized protein from Caenorhabditis elegans.